The chain runs to 333 residues: Adenosine deaminase (333 aa).

Residues H12 and H14 each contribute to the Zn(2+) site. Residues H14, D16, and G170 each coordinate substrate. A Zn(2+)-binding site is contributed by H197. Residue E200 is the Proton donor of the active site. Position 278 (D278) interacts with Zn(2+). Substrate is bound at residue D279.

Belongs to the metallo-dependent hydrolases superfamily. Adenosine and AMP deaminases family. Adenosine deaminase subfamily. It depends on Zn(2+) as a cofactor.

The enzyme catalyses adenosine + H2O + H(+) = inosine + NH4(+). The catalysed reaction is 2'-deoxyadenosine + H2O + H(+) = 2'-deoxyinosine + NH4(+). Catalyzes the hydrolytic deamination of adenosine and 2-deoxyadenosine. This is Adenosine deaminase from Salmonella paratyphi C (strain RKS4594).